The following is a 340-amino-acid chain: Flavonoid 7-O-methyltransferase 1 (340 aa).

S-adenosyl-L-methionine is bound at residue D207. H245 (proton acceptor) is an active-site residue.

Belongs to the class I-like SAM-binding methyltransferase superfamily. Cation-independent O-methyltransferase family. As to quaternary structure, homodimer. In terms of tissue distribution, expressed in leaves.

It carries out the reaction (2S)-naringenin + S-adenosyl-L-methionine = (2S)-sakuranetin + S-adenosyl-L-homocysteine + H(+). The catalysed reaction is scutellarein + S-adenosyl-L-methionine = scutellarein 7-methyl ether + S-adenosyl-L-homocysteine. The enzyme catalyses apigenin + S-adenosyl-L-methionine = genkwanin + S-adenosyl-L-homocysteine + H(+). It catalyses the reaction luteolin + S-adenosyl-L-methionine = luteolin 7-methyl ether + S-adenosyl-L-homocysteine + H(+). It carries out the reaction chrysoeriol + S-adenosyl-L-methionine = velutin + S-adenosyl-L-homocysteine. The catalysed reaction is diosmetin + S-adenosyl-L-methionine = luteolin 4',7-dimethyl ether + S-adenosyl-L-homocysteine. The enzyme catalyses acacetin + S-adenosyl-L-methionine = apigenin 4',7-dimethyl ether + S-adenosyl-L-homocysteine. It catalyses the reaction scutellarein 4'-methyl ether + S-adenosyl-L-methionine = ladanein + S-adenosyl-L-homocysteine. It functions in the pathway flavonoid metabolism. In terms of biological role, flavonoid 7-O-methyltransferase involved in the biosynthesis of polymethoxylated flavonoids natural products such as nevadensin and salvigenin, aroma compounds which contribute to the flavor of sweet basil, and exhibit pharmacological activities such as anti-allergic, anti-oxidant, antibacterial, anti-proliferative, and anti-inflammatory effects. Catalyzes S-adenosylmethionine-dependent regioselective 7-O-methylation of flavonoids; active on various hydroxylated flavonoid substrates, including apigenin (API) and luteolin (LUT), and, with a lower efficiency, scutellarein (SCU), naringenin (NAR), chrysoeriol (CHRYS), diosmetin (DIOS), acacetin (ACA) and scutellarein-7-methyl ether (SCU7Me). This chain is Flavonoid 7-O-methyltransferase 1, found in Ocimum basilicum (Sweet basil).